Consider the following 95-residue polypeptide: Protein TusB (95 aa).

This sequence belongs to the DsrH/TusB family. Heterohexamer, formed by a dimer of trimers. The hexameric TusBCD complex contains 2 copies each of TusB, TusC and TusD. The TusBCD complex interacts with TusE.

It localises to the cytoplasm. Functionally, part of a sulfur-relay system required for 2-thiolation of 5-methylaminomethyl-2-thiouridine (mnm(5)s(2)U) at tRNA wobble positions. This is Protein TusB from Sodalis glossinidius (strain morsitans).